The primary structure comprises 89 residues: Antitoxin RelB (89 aa).

The protein belongs to the phD/YefM antitoxin family. As to quaternary structure, interacts with toxin RelE, which neutralizes its toxicity. Also interacts with toxins RelG and RelK in vitro, in M.smegmatis coexpression with non-cognate toxins neutralizes the toxicity of RelG while increasing the toxicity of RelK.

Functionally, antitoxin component of a type II toxin-antitoxin (TA) system. Upon expression in M.smegmatis neutralizes the effect of toxin RelE. In terms of biological role, induces its own promoter, in combination with RelE represses its own promoter. Binds DNA in complex with toxin RelE but not alone. The protein is Antitoxin RelB (relB) of Mycobacterium tuberculosis (strain ATCC 25618 / H37Rv).